The sequence spans 1344 residues: Regulatory-associated protein of TOR 1 (1344 aa).

Over residues 28–44 the composition is skewed to basic and acidic residues; it reads CVSSHDDGDSRRKDSEA. Disordered stretches follow at residues 28-56 and 771-818; these read CVSSHDDGDSRRKDSEAKSSSSYGNGTTE and ASTD…DSVS. Over residues 785–816 the composition is skewed to low complexity; sequence SSSPLGSSGLMQGSPLSDDSSLHSDSGMMHDS. 7 WD repeats span residues 1025-1064, 1070-1111, 1125-1164, 1168-1208, 1214-1255, 1259-1298, and 1307-1344; these read RFETGTKTALLHPFSPIVVAADENERIRVWNYEEATLLNG, FPDK…GKQK, GARDLNAVVDWQQQSGYLYASGETSTVTLWDLEKEQLVRS, ESEC…PLVC, QKVE…DTYL, AHRGSLTALAVHRHAPIIASGSAKQLIKVFSLQGEQLGII, and QKIGSVSCLTFHPYQVLLAAGAADSFVSIYTHDNSQAR.

The protein belongs to the WD repeat RAPTOR family. In terms of assembly, interacts with TOR, ATPK1 and ML1. Interacts with KIN10. Phosphorylated by KIN10. In terms of tissue distribution, expressed in roots, leaves, flowers and seeds.

The protein localises to the cytoplasm. Functionally, probable component of the plant TOR kinase pathway that recruits substrates for TOR. Modulates plant cell growth and regulates the activity of ATPK1 kinase in response to osmotic stress. This Arabidopsis thaliana (Mouse-ear cress) protein is Regulatory-associated protein of TOR 1 (RAPTOR1).